Reading from the N-terminus, the 164-residue chain is UPF0304 protein YfbU (164 aa).

Belongs to the UPF0304 family.

In Salmonella enteritidis PT4 (strain P125109), this protein is UPF0304 protein YfbU.